A 173-amino-acid chain; its full sequence is Ribulose bisphosphate carboxylase small subunit, chloroplastic 3 (173 aa).

A chloroplast-targeting transit peptide spans 1–49 (MASIPATVATVAQANMVAPFTGLKSNAAFPVTKKVNDFSTLPSNGGRVQ).

This sequence belongs to the RuBisCO small chain family. Heterohexadecamer of 8 large and 8 small subunits.

Its subcellular location is the plastid. It is found in the chloroplast. Functionally, ruBisCO catalyzes two reactions: the carboxylation of D-ribulose 1,5-bisphosphate, the primary event in carbon dioxide fixation, as well as the oxidative fragmentation of the pentose substrate. Both reactions occur simultaneously and in competition at the same active site. Although the small subunit is not catalytic it is essential for maximal activity. This is Ribulose bisphosphate carboxylase small subunit, chloroplastic 3 from Flaveria pringlei.